The primary structure comprises 103 residues: Small ribosomal subunit protein uS10 (103 aa).

Belongs to the universal ribosomal protein uS10 family. As to quaternary structure, part of the 30S ribosomal subunit.

Its function is as follows. Involved in the binding of tRNA to the ribosomes. The sequence is that of Small ribosomal subunit protein uS10 from Pseudomonas savastanoi pv. phaseolicola (strain 1448A / Race 6) (Pseudomonas syringae pv. phaseolicola (strain 1448A / Race 6)).